The primary structure comprises 290 residues: MKSGFVSIIGRPSTGKSTLLNSICEHQISIISSIPQTTRNKIKGIFTDKRGQIIFIDTPGFHLSKKQFNIALMHNVHSAIKETELILYVIDIQDKPGIEENEILTIISKSKINFLVVINKIDIQKTKEREIMIFLEEKGIKKDNIIKISAEQKINIEEIKDKIYENLQEGPLYYPEEYYTDQEMNLRTSEIIRGVTIKKLKEELPYSLYIEIEILEDRKNKLFIKANIIVAVESQKGIIVGKGGKGIKTIGEEARKIISEIFEKKCDLFLQVKLRKNWNKNPKLIKNLIN.

Positions 2 to 169 (KSGFVSIIGR…KDKIYENLQE (168 aa)) constitute an Era-type G domain. Residues 10–17 (GRPSTGKS) form a G1 region. 10 to 17 (GRPSTGKS) contacts GTP. Residues 36–40 (QTTRN) are G2. The interval 57–60 (DTPG) is G3. Residues 57–61 (DTPGF) and 119–122 (NKID) each bind GTP. The interval 119–122 (NKID) is G4. Positions 148 to 150 (ISA) are G5. The 77-residue stretch at 200-276 (LKEELPYSLY…DLFLQVKLRK (77 aa)) folds into the KH type-2 domain.

Belongs to the TRAFAC class TrmE-Era-EngA-EngB-Septin-like GTPase superfamily. Era GTPase family. In terms of assembly, monomer.

The protein localises to the cytoplasm. It localises to the cell inner membrane. Its function is as follows. An essential GTPase that binds both GDP and GTP, with rapid nucleotide exchange. Plays a role in 16S rRNA processing and 30S ribosomal subunit biogenesis and possibly also in cell cycle regulation and energy metabolism. This Borrelia turicatae (strain 91E135) protein is GTPase Era.